The following is a 398-amino-acid chain: O-methyltransferase hmp5 (398 aa).

S-adenosyl-L-methionine-binding positions include Gly233–Gly234, Glu261, and Asp283–Phe284. Catalysis depends on His303, which acts as the Proton acceptor.

Belongs to the class I-like SAM-binding methyltransferase superfamily. Cation-independent O-methyltransferase family.

The protein operates within secondary metabolite biosynthesis. Functionally, O-methyltransferase; part of the gene cluster that mediates the biosynthesis of hypothemycin, a resorcylic acid lactone (RAL) that irreversibly inhibits a subset of protein kinases with a conserved cysteine in the ATP binding site such as human ERK2. The first step is performed by both PKSs hmp3 and hmp8 and leads to the production of 7',8'-dehydrozearalenol (DHZ). The highly reducing PKS hpm8 synthesizes the reduced hexaketide (7S,11S,2E,8E)-7,11-dihydroxy-dodeca-2,8-dienoate, which is transferred downstream to the non-reducing PKS hpm3. Hpm3 then extends the reduced hexaketide to a nonaketide, after which regioselective cyclization and macrolactonization affords DHZ. The next step is the conversion of DHZ into aigialomycin C and is performed by the O-methyltransferase hmp5, the FAD-binding monooxygenase hmp7, and the cytochrome P450 monooxygenase hmp1. The wide substrate tolerance of the hmp5 and hmp7 implies that the reactions from DHZ to aigialomycin C can occur in any order. The steps from aigialomycin C to hypothemycin are less well established. The FAD-linked oxidoreductase hmp9 presumably catalyzes oxidation of the C-6' hydroxyl to a ketone. The timing of this oxidation is important, since the resulting enone functional group is a Michael acceptor that can react spontaneously with glutathione, an abundant metabolite in fungal cells. The glutathione S-transferase hmp2 catalyzes cis-trans isomerization of the 7',8' double bond with equilibrium favoring the trans isomer. The hpm6-encoded transporter might preferentially pump hypothemycin out of the cell relative to the trans isomer aigialomycin A. The cis-to-trans isomerization may be coupled with C-4' hydroxylation, since all known hypothemycin analogs containing the enone functional group also have hydroxyl groups at both C-4' and C-5'. This chain is O-methyltransferase hmp5, found in Hypomyces subiculosus (Nectria subiculosa).